The following is a 266-amino-acid chain: tRNA pseudouridine synthase A (266 aa).

The active-site Nucleophile is the D55. Position 110 (Y110) interacts with substrate.

The protein belongs to the tRNA pseudouridine synthase TruA family.

It catalyses the reaction uridine(38/39/40) in tRNA = pseudouridine(38/39/40) in tRNA. In terms of biological role, formation of pseudouridine at positions 38, 39 and 40 in the anticodon stem and loop of transfer RNAs. In Thermococcus sibiricus (strain DSM 12597 / MM 739), this protein is tRNA pseudouridine synthase A.